The sequence spans 378 residues: Fetuin-B (378 aa).

The first 18 residues, 1–18, serve as a signal peptide directing secretion; sequence MGVLRLLVLCTLAACCVA. Cystatin fetuin-B-type domains lie at 28–141 and 152–261; these read NAPF…YNCT and SMCP…VSCE. N40 carries N-linked (GlcNAc...) asparagine glycosylation. Cystine bridges form between C96-C107, C120-C140, C154-C157, C217-C224, and C237-C260. N139 carries N-linked (GlcNAc...) asparagine glycosylation. Disordered regions lie at residues 266 to 338 and 357 to 378; these read QDQV…PQGD and LPFPGKEQRSPECPGPEKQRTP. Residues 286 to 297 show a composition bias toward polar residues; sequence QKNTAPTSSPSI. 2 O-linked (GalNAc...) threonine glycosylation sites follow: T289 and T292. Position 316 is a phosphoserine (S316). A compositionally biased stretch (basic and acidic residues) spans 362–378; sequence KEQRSPECPGPEKQRTP.

The protein belongs to the fetuin family. As to expression, liver.

The protein localises to the secreted. In terms of biological role, protease inhibitor required for egg fertilization. Required to prevent premature zona pellucida hardening before fertilization, probably by inhibiting the protease activity of ASTL, a protease that mediates the cleavage of ZP2 and triggers zona pellucida hardening. This Rattus norvegicus (Rat) protein is Fetuin-B (Fetub).